We begin with the raw amino-acid sequence, 149 residues long: Large ribosomal subunit protein bL9 (149 aa).

The protein belongs to the bacterial ribosomal protein bL9 family.

Binds to the 23S rRNA. The protein is Large ribosomal subunit protein bL9 of Sulfurihydrogenibium sp. (strain YO3AOP1).